A 1144-amino-acid polypeptide reads, in one-letter code: MASSSSSSRWSYDVFLSFRGEDTRKTFTSHLYEVLNDKGIKTFQDDKRLEYGATIPGELCKAIEESQFAIVVFSENYATSRWCLNELVKIMECKTRFKQTVIPIFYDVDPSHVRNQKESFAKAFEEHETKYKDDVEGIQRWRIALNEAANLKGSCDNRDKTDADCIRQIVDQISSKLCKISLSYLQNIVGIDTHLEKIESLLEIGINGVRIMGIWGMGGVGKTTIARAIFDTLLGRMDSSYQFDGACFLKDIKENKRGMHSLQNALLSELLREKANYNNEEDGKHQMASRLRSKKVLIVLDDIDNKDHYLEYLAGDLDWFGNGSRIIITTRDKHLIEKNDIIYEVTALPDHESIQLFKQHAFGKEVPNENFEKLSLEVVNYAKGLPLALKVWGSLLHNLRLTEWKSAIEHMKNNSYSGIIDKLKISYDGLEPKQQEMFLDIACFLRGEEKDYILQILESCHIGAEYGLRILIDKSLVFISEYNQVQMHDLIQDMGKYIVNFQKDPGERSRLWLAKEVEEVMSNNTGTMAMEAIWVSSYSSTLRFSNQAVKNMKRLRVFNMGRSSTHYAIDYLPNNLRCFVCTNYPWESFPSTFELKMLVHLQLRHNSLRHLWTETKHLPSLRRIDLSWSKRLTRTPDFTGMPNLEYVNLYQCSNLEEVHHSLGCCSKVIGLYLNDCKSLKRFPCVNVESLEYLGLRSCDSLEKLPEIYGRMKPEIQIHMQGSGIRELPSSIFQYKTHVTKLLLWNMKNLVALPSSICRLKSLVSLSVSGCSKLESLPEEIGDLDNLRVFDASDTLILRPPSSIIRLNKLIILMFRGFKDGVHFEFPPVAEGLHSLEYLNLSYCNLIDGGLPEEIGSLSSLKKLDLSRNNFEHLPSSIAQLGALQSLDLKDCQRLTQLPELPPELNELHVDCHMALKFIHYLVTKRKKLHRVKLDDAHNDTMYNLFAYTMFQNISSMRHDISASDSLSLTVFTGQPYPEKIPSWFHHQGWDSSVSVNLPENWYIPDKFLGFAVCYSRSLIDTTAHLIPVCDDKMSRMTQKLALSECDTESSNYSEWDIHFFFVPFAGLWDTSKANGKTPNDYGIIRLSFSGEEKMYGLRLLYKEGPEVNALLQMRENSNEPTEHSTGIRRTQYNNRTSFYELING.

The region spanning 10–177 (WSYDVFLSFR…QIVDQISSKL (168 aa)) is the TIR domain. Glu-86 is a catalytic residue. The NB-ARC domain occupies 172–447 (QISSKLCKIS…FLDIACFLRG (276 aa)). 216-223 (GMGGVGKT) contributes to the ATP binding site. LRR repeat units follow at residues 597–618 (MLVH…TKHL), 620–642 (SLRR…TGMP), 643–665 (NLEY…LGCC), 834–854 (SLEY…PEEI), 859–880 (SLKK…IAQL), and 882–904 (ALQS…PPEL).

It belongs to the disease resistance NB-LRR family.

The protein resides in the cytoplasm. It catalyses the reaction NAD(+) + H2O = ADP-D-ribose + nicotinamide + H(+). Disease resistance protein. Resistance proteins guard the plant against pathogens that contain an appropriate avirulence protein via a direct or indirect interaction with this avirulence protein. That triggers a defense system including the hypersensitive response, which restricts the pathogen growth. The sequence is that of TMV resistance protein N (N) from Nicotiana glutinosa (Tobacco).